The chain runs to 354 residues: Homeobox-leucine zipper protein HOX27 (354 aa).

Positions 98–175 are disordered; the sequence is SVAAGAPGME…DDEGASARKK (78 aa). A compositionally biased stretch (gly residues) spans 148 to 157; it reads QGGGGGGGGE. A DNA-binding region (homeobox) is located at residues 171 to 230; it reads SARKKLRLSKEQSAFLEESFKEHSTLNPKQKVALAKQLNLRPRQVEVWFQNRRARTKLKQ. The leucine-zipper stretch occupies residues 229 to 273; sequence KQTEVDCEYLKRCCETLTEENRRLHKELAELRALKTARPFYMHLP. Residues 294–323 form a disordered region; that stretch reads STSAPAAATSPAAAPTAAARTAVASPEPHR.

Belongs to the HD-ZIP homeobox family. Class II subfamily. Expressed in seedlings, roots, stems, leaf sheaths and blades and panicles.

Its subcellular location is the nucleus. Its function is as follows. Probable transcription factor. This is Homeobox-leucine zipper protein HOX27 (HOX27) from Oryza sativa subsp. japonica (Rice).